Consider the following 1026-residue polypeptide: Multidrug resistance protein MdtC (1026 aa).

11 helical membrane-spanning segments follow: residues 15–35 (ILIA…LPVA), 333–353 (EVEE…FLFL), 360–380 (LIPA…MYLC), 387–407 (LSLM…IVVL), 431–451 (VGFT…PLLL), 463–483 (FAVT…TLTP), 528–548 (LVGV…IAIP), 853–873 (LILI…LYES), 897–917 (LFNA…IGIV), 953–973 (PIMM…LSDG), and 984–1004 (ITIV…TPVV).

Belongs to the resistance-nodulation-cell division (RND) (TC 2.A.6) family. MdtC subfamily. In terms of assembly, part of a tripartite efflux system composed of MdtA, MdtB and MdtC. MdtC forms a heteromultimer with MdtB.

The protein resides in the cell inner membrane. This chain is Multidrug resistance protein MdtC, found in Salmonella paratyphi B (strain ATCC BAA-1250 / SPB7).